Here is a 173-residue protein sequence, read N- to C-terminus: Photosystem I assembly protein Ycf3 (173 aa).

3 TPR repeats span residues 35-68 (AYVY…EENS), 72-105 (SETL…NPNQ), and 120-153 (GRIA…NPGG).

This sequence belongs to the Ycf3 family.

It is found in the cellular thylakoid membrane. Its function is as follows. Essential for the assembly of the photosystem I (PSI) complex. May act as a chaperone-like factor to guide the assembly of the PSI subunits. This chain is Photosystem I assembly protein Ycf3, found in Synechococcus sp. (strain CC9605).